A 143-amino-acid polypeptide reads, in one-letter code: Nucleoside diphosphate kinase (143 aa).

Residues Lys11, Phe59, Arg87, Thr93, Arg104, and Asn114 each contribute to the ATP site. His117 acts as the Pros-phosphohistidine intermediate in catalysis.

Belongs to the NDK family. In terms of assembly, homotetramer. Requires Mg(2+) as cofactor.

It localises to the cytoplasm. The catalysed reaction is a 2'-deoxyribonucleoside 5'-diphosphate + ATP = a 2'-deoxyribonucleoside 5'-triphosphate + ADP. It catalyses the reaction a ribonucleoside 5'-diphosphate + ATP = a ribonucleoside 5'-triphosphate + ADP. Functionally, major role in the synthesis of nucleoside triphosphates other than ATP. The ATP gamma phosphate is transferred to the NDP beta phosphate via a ping-pong mechanism, using a phosphorylated active-site intermediate. The sequence is that of Nucleoside diphosphate kinase from Salmonella agona (strain SL483).